Consider the following 538-residue polypeptide: C-22 sterol desaturase ERG5 (538 aa).

A helical membrane pass occupies residues 46-66; it reads LKIFATLICILLVWDQVAYQI. Residues K164 and K198 each participate in a glycyl lysine isopeptide (Lys-Gly) (interchain with G-Cter in ubiquitin) cross-link. Residue C476 participates in heme binding.

This sequence belongs to the cytochrome P450 family. In terms of assembly, interacts with ERG28. It depends on heme as a cofactor.

The protein localises to the endoplasmic reticulum membrane. It carries out the reaction 5-dehydroepisterol + NADPH + O2 + H(+) = ergosta-5,7,22,24(28)-tetraen-3beta-ol + NADP(+) + 2 H2O. It participates in steroid metabolism; ergosterol biosynthesis; ergosterol from zymosterol: step 4/5. Its function is as follows. C-22 sterol desaturase; part of the third module of ergosterol biosynthesis pathway that includes the late steps of the pathway. ERG5 converts 5-dehydroepisterol into ergosta-5,7,22,24(28)-tetraen-3beta-ol by forming the C-22(23) double bond in the sterol side chain. The third module or late pathway involves the ergosterol synthesis itself through consecutive reactions that mainly occur in the endoplasmic reticulum (ER) membrane. Firstly, the squalene synthase ERG9 catalyzes the condensation of 2 farnesyl pyrophosphate moieties to form squalene, which is the precursor of all steroids. Squalene synthase is crucial for balancing the incorporation of farnesyl diphosphate (FPP) into sterol and nonsterol isoprene synthesis. Secondly, the squalene epoxidase ERG1 catalyzes the stereospecific oxidation of squalene to (S)-2,3-epoxysqualene, which is considered to be a rate-limiting enzyme in steroid biosynthesis. Then, the lanosterol synthase ERG7 catalyzes the cyclization of (S)-2,3 oxidosqualene to lanosterol, a reaction that forms the sterol core. In the next steps, lanosterol is transformed to zymosterol through a complex process involving various demethylation, reduction and desaturation reactions. The lanosterol 14-alpha-demethylase ERG11 (also known as CYP51) catalyzes C14-demethylation of lanosterol to produce 4,4'-dimethyl cholesta-8,14,24-triene-3-beta-ol, which is critical for ergosterol biosynthesis. The C-14 reductase ERG24 reduces the C14=C15 double bond of 4,4-dimethyl-cholesta-8,14,24-trienol to produce 4,4-dimethyl-cholesta-8,24-dienol. 4,4-dimethyl-cholesta-8,24-dienol is substrate of the C-4 demethylation complex ERG25-ERG26-ERG27 in which ERG25 catalyzes the three-step monooxygenation required for the demethylation of 4,4-dimethyl and 4alpha-methylsterols, ERG26 catalyzes the oxidative decarboxylation that results in a reduction of the 3-beta-hydroxy group at the C-3 carbon to an oxo group, and ERG27 is responsible for the reduction of the keto group on the C-3. ERG28 has a role as a scaffold to help anchor ERG25, ERG26 and ERG27 to the endoplasmic reticulum and ERG29 regulates the activity of the iron-containing C4-methylsterol oxidase ERG25. Then, the sterol 24-C-methyltransferase ERG6 catalyzes the methyl transfer from S-adenosyl-methionine to the C-24 of zymosterol to form fecosterol. The C-8 sterol isomerase ERG2 catalyzes the reaction which results in unsaturation at C-7 in the B ring of sterols and thus converts fecosterol to episterol. The sterol-C5-desaturase ERG3 then catalyzes the introduction of a C-5 double bond in the B ring to produce 5-dehydroepisterol. The C-22 sterol desaturase ERG5 further converts 5-dehydroepisterol into ergosta-5,7,22,24(28)-tetraen-3beta-ol by forming the C-22(23) double bond in the sterol side chain. Finally, ergosta-5,7,22,24(28)-tetraen-3beta-ol is substrate of the C-24(28) sterol reductase ERG4 to produce ergosterol. The chain is C-22 sterol desaturase ERG5 from Saccharomyces cerevisiae (strain ATCC 204508 / S288c) (Baker's yeast).